An 826-amino-acid polypeptide reads, in one-letter code: Lysine-specific histone demethylase 1B (826 aa).

Over residues Met1–Arg11 the composition is skewed to basic residues. A disordered region spans residues Met1–Ser46. A phosphoserine mark is found at Ser17 and Ser26. Residues Cys53, Cys58, Cys65, Cys73, His84, His90, Cys92, Cys95, Cys142, Cys147, Cys169, and Cys185 each contribute to the Zn(2+) site. The CW-type zinc finger occupies Asp133–Val193. Residue Ser253 is modified to Phosphoserine. Positions Tyr279 to Asp298 are GLYR1-binding. Residues Pro281–Gln379 enclose the SWIRM domain. Lys389–Val445 lines the FAD pocket. Histone H3-binding stretches follow at residues Ile444–Leu473, Phe493–Arg504, and Phe544–His578. The interval Phe570–Ala572 is GLYR1-binding. FAD-binding positions include Val604, Glu799, and Gln807 to Val809. The GLYR1-binding stretch occupies residues Asn802 to Arg818.

It belongs to the flavin monoamine oxidase family. As to quaternary structure, interacts with its cofactor GLYR1 at nucleosomes; this interaction stimulates H3K4me1 and H3K4me2 demethylation. In contrast to KDM1A, does not form a complex with RCOR1/CoREST. Possible accessory component of the polycomb repressive deubiquitinase (PR-DUB) complex, at least composed of BAP1, one of ASXL1, ASXL2 or (probably) ASXL3 and one of MBD5 or MBD6. The PR-DUB core associates with a number of accessory proteins, including FOXK1, FOXK2, KDM1B, HCFC1 and OGT; KDM1B specifically associates with ASXL2 PR-DUB complexes. Requires FAD as cofactor. The cofactor is Zn(2+). Expressed in growing oocytes and in intestinal gland.

It localises to the nucleus. Its subcellular location is the chromosome. The enzyme catalyses N(6),N(6)-dimethyl-L-lysyl(4)-[histone H3] + 2 A + 2 H2O = L-lysyl(4)-[histone H3] + 2 formaldehyde + 2 AH2. It carries out the reaction N(6)-methyl-L-lysyl(4)-[histone H3] + A + H2O = L-lysyl(4)-[histone H3] + formaldehyde + AH2. Its activity is regulated as follows. Inhibited by tranylcypromine, but not by pargyline, deprenyl or rasagiline. Histone H3K4me1 and H3K4me2 demethylase activity is inhibited by DNA, this inhibition is released in complex with GLYR1. In terms of biological role, histone demethylase that demethylates 'Lys-4' of histone H3, a specific tag for epigenetic transcriptional activation, thereby acting as a corepressor. Required for de novo DNA methylation of a subset of imprinted genes during oogenesis. Acts by oxidizing the substrate by FAD to generate the corresponding imine that is subsequently hydrolyzed. Demethylates both mono- and di-methylated 'Lys-4' of histone H3. Has no effect on tri-methylated 'Lys-4', mono-, di- or tri-methylated 'Lys-9', mono-, di- or tri-methylated 'Lys-27', mono-, di- or tri-methylated 'Lys-36' of histone H3, or on mono-, di- or tri-methylated 'Lys-20' of histone H4. Functionally, histone demethylase that demethylates 'Lys-4' of histone H3, a specific tag for epigenetic transcriptional activation, thereby acting as a corepressor. Required for de novo DNA methylation of a subset of imprinted genes during oogenesis. Acts by oxidizing the substrate by FAD to generate the corresponding imine that is subsequently hydrolyzed. Demethylates both mono- and di-methylated 'Lys-4' of histone H3. Has no effect on tri-methylated 'Lys-4', mono-, di- or tri-methylated 'Lys-9', mono-, di- or tri-methylated 'Lys-27', mono-, di- or tri-methylated 'Lys-36' of histone H3, or on mono-, di- or tri-methylated 'Lys-20' of histone H4. Alone, it is unable to demethylate H3K4me on nucleosomes and requires the presence of GLYR1 to achieve such activity, they form a multifunctional enzyme complex that modifies transcribed chromatin and facilitates Pol II transcription through nucleosomes. The chain is Lysine-specific histone demethylase 1B from Mus musculus (Mouse).